A 451-amino-acid polypeptide reads, in one-letter code: Trigger factor (451 aa).

A PPIase FKBP-type domain is found at 165 to 250 (DDKLTIDFEG…LHQIQAREVL (86 aa)).

It belongs to the FKBP-type PPIase family. Tig subfamily.

The protein localises to the cytoplasm. The catalysed reaction is [protein]-peptidylproline (omega=180) = [protein]-peptidylproline (omega=0). Its function is as follows. Involved in protein export. Acts as a chaperone by maintaining the newly synthesized protein in an open conformation. Functions as a peptidyl-prolyl cis-trans isomerase. The chain is Trigger factor from Helicobacter acinonychis (strain Sheeba).